Reading from the N-terminus, the 193-residue chain is Thymidine kinase (193 aa).

Residues Gly-16–Ser-23 and Asp-89–Gln-92 contribute to the ATP site. Glu-90 (proton acceptor) is an active-site residue. Residues Cys-146, Cys-149, Cys-184, and Cys-187 each contribute to the Zn(2+) site.

Belongs to the thymidine kinase family. Homotetramer.

The protein resides in the cytoplasm. It carries out the reaction thymidine + ATP = dTMP + ADP + H(+). In Thermoanaerobacter pseudethanolicus (strain ATCC 33223 / 39E) (Clostridium thermohydrosulfuricum), this protein is Thymidine kinase.